The following is a 178-amino-acid chain: Large ribosomal subunit protein uL6 (178 aa).

This sequence belongs to the universal ribosomal protein uL6 family. Part of the 50S ribosomal subunit.

Functionally, this protein binds to the 23S rRNA, and is important in its secondary structure. It is located near the subunit interface in the base of the L7/L12 stalk, and near the tRNA binding site of the peptidyltransferase center. In Frankia casuarinae (strain DSM 45818 / CECT 9043 / HFP020203 / CcI3), this protein is Large ribosomal subunit protein uL6.